The primary structure comprises 340 residues: Nuclear hormone receptor family member nhr-268 (340 aa).

The nuclear receptor DNA-binding region spans 1–75 (MNCLVCSARA…IGMKAASKND (75 aa)). 2 NR C4-type zinc fingers span residues 3-23 (CLVC…CFAC) and 39-58 (CKYF…CRAC). Residues 98–337 (KNDKNYSNFI…KRLMQDIFSH (240 aa)) enclose the NR LBD domain.

Belongs to the nuclear hormone receptor family.

The protein localises to the nucleus. Its function is as follows. Orphan nuclear receptor. The chain is Nuclear hormone receptor family member nhr-268 (nhr-268) from Caenorhabditis elegans.